A 297-amino-acid polypeptide reads, in one-letter code: Nitrogenase iron protein 2 (297 aa).

Residue 14 to 21 (GKGGIGKS) coordinates ATP. Cys-102 contributes to the [4Fe-4S] cluster binding site. The residue at position 105 (Arg-105) is an ADP-ribosylarginine; by dinitrogenase reductase ADP-ribosyltransferase. Residue Cys-136 participates in [4Fe-4S] cluster binding.

This sequence belongs to the NifH/BchL/ChlL family. In terms of assembly, homodimer. The cofactor is [4Fe-4S] cluster. The reversible ADP-ribosylation of Arg-105 inactivates the nitrogenase reductase and regulates nitrogenase activity.

The catalysed reaction is N2 + 8 reduced [2Fe-2S]-[ferredoxin] + 16 ATP + 16 H2O = H2 + 8 oxidized [2Fe-2S]-[ferredoxin] + 2 NH4(+) + 16 ADP + 16 phosphate + 6 H(+). Its function is as follows. The key enzymatic reactions in nitrogen fixation are catalyzed by the nitrogenase complex, which has 2 components: the iron protein and the molybdenum-iron protein. In Nostoc sp. (strain PCC 7120 / SAG 25.82 / UTEX 2576), this protein is Nitrogenase iron protein 2 (nifH2).